The chain runs to 282 residues: Phosphate transport system permease protein PstA (282 aa).

A run of 6 helical transmembrane segments spans residues 22–42 (LSYISVIIGLFWLCWILFTLI), 71–91 (LIGSFFIVGAGTLIGTPIGVL), 111–131 (FLNDILLSAPSIIIGLFVYSL), 136–156 (IEHFSGWAGAFALALLLIPIV), 198–218 (ILTGVLLAVARISGETAPLLF), and 254–274 (NLAWAGAALITLFVLCLNIFT). Residues 71–274 (LIGSFFIVGA…LFVLCLNIFT (204 aa)) form the ABC transmembrane type-1 domain.

This sequence belongs to the binding-protein-dependent transport system permease family. CysTW subfamily.

The protein localises to the cell inner membrane. Its function is as follows. Part of the binding-protein-dependent transport system for phosphate; probably responsible for the translocation of the substrate across the membrane. The polypeptide is Phosphate transport system permease protein PstA (pstA) (Haemophilus influenzae (strain ATCC 51907 / DSM 11121 / KW20 / Rd)).